The following is a 160-amino-acid chain: Serine-protein kinase RsbW (160 aa).

Belongs to the anti-sigma-factor family.

The catalysed reaction is L-seryl-[protein] + ATP = O-phospho-L-seryl-[protein] + ADP + H(+). It carries out the reaction L-threonyl-[protein] + ATP = O-phospho-L-threonyl-[protein] + ADP + H(+). Negative regulator of sigma-B activity. Phosphorylates and inactivates its specific antagonist protein, RsbV. Upon phosphorylation of RsbV, RsbW is released and binds to sigma-B, thereby blocking its ability to form an RNA polymerase holoenzyme (E-sigma-B). The protein is Serine-protein kinase RsbW of Bacillus cereus (strain AH187).